Reading from the N-terminus, the 397-residue chain is Elongation factor Tu (397 aa).

A tr-type G domain is found at 10–207; the sequence is KPHVNIGTIG…AVDESIPEPV (198 aa). The G1 stretch occupies residues 19-26; that stretch reads GHVDHGKT. 19 to 26 provides a ligand contact to GTP; it reads GHVDHGKT. Mg(2+) is bound at residue Thr-26. The interval 63 to 67 is G2; it reads GITIN. The tract at residues 84 to 87 is G3; that stretch reads DAPG. Residues 84–88 and 139–142 each bind GTP; these read DAPGH and NKSD. The G4 stretch occupies residues 139–142; sequence NKSD. The interval 177–179 is G5; it reads SGL.

Belongs to the TRAFAC class translation factor GTPase superfamily. Classic translation factor GTPase family. EF-Tu/EF-1A subfamily. As to quaternary structure, monomer.

The protein localises to the cytoplasm. It carries out the reaction GTP + H2O = GDP + phosphate + H(+). GTP hydrolase that promotes the GTP-dependent binding of aminoacyl-tRNA to the A-site of ribosomes during protein biosynthesis. The chain is Elongation factor Tu from Clavibacter michiganensis subsp. michiganensis (strain NCPPB 382).